Here is an 81-residue protein sequence, read N- to C-terminus: Protein L83L (81 aa).

The segment at 1-28 is disordered; it reads MDTSLKNNDGALEADNKNYQDYKDEPDK. The segment covering 14–28 has biased composition (basic and acidic residues); the sequence is ADNKNYQDYKDEPDK.

This sequence belongs to the asfivirus L83L family. As to quaternary structure, interacts with host IL1B.

Its subcellular location is the host cytoplasm. Functionally, may subvert the host innate immune response by interacting with host IL1B and interfering with its function. In Ornithodoros (relapsing fever ticks), this protein is Protein L83L.